A 116-amino-acid chain; its full sequence is Phosphoribosyl-AMP cyclohydrolase (116 aa).

Position 82 (aspartate 82) interacts with Mg(2+). Cysteine 83 lines the Zn(2+) pocket. Aspartate 84 and aspartate 86 together coordinate Mg(2+). 2 residues coordinate Zn(2+): cysteine 99 and cysteine 106.

This sequence belongs to the PRA-CH family. As to quaternary structure, homodimer. The cofactor is Mg(2+). Requires Zn(2+) as cofactor.

The protein resides in the cytoplasm. The catalysed reaction is 1-(5-phospho-beta-D-ribosyl)-5'-AMP + H2O = 1-(5-phospho-beta-D-ribosyl)-5-[(5-phospho-beta-D-ribosylamino)methylideneamino]imidazole-4-carboxamide. It participates in amino-acid biosynthesis; L-histidine biosynthesis; L-histidine from 5-phospho-alpha-D-ribose 1-diphosphate: step 3/9. In terms of biological role, catalyzes the hydrolysis of the adenine ring of phosphoribosyl-AMP. The chain is Phosphoribosyl-AMP cyclohydrolase from Saccharopolyspora erythraea (strain ATCC 11635 / DSM 40517 / JCM 4748 / NBRC 13426 / NCIMB 8594 / NRRL 2338).